We begin with the raw amino-acid sequence, 405 residues long: Replication factor C large subunit (405 aa).

47–54 (GPPGVGKT) lines the ATP pocket.

The protein belongs to the activator 1 small subunits family. RfcL subfamily. In terms of assembly, heteromultimer composed of small subunits (RfcS) and large subunits (RfcL).

Functionally, part of the RFC clamp loader complex which loads the PCNA sliding clamp onto DNA. This is Replication factor C large subunit from Saccharolobus islandicus (strain L.S.2.15 / Lassen #1) (Sulfolobus islandicus).